A 215-amino-acid chain; its full sequence is Cytochrome b6 (215 aa).

A helical membrane pass occupies residues isoleucine 32 to phenylalanine 52. Residue cysteine 35 coordinates heme c. Residues histidine 86 and histidine 100 each coordinate heme b. 3 helical membrane passes run alanine 90–phenylalanine 110, leucine 116–tyrosine 136, and leucine 186–isoleucine 206. Heme b is bound by residues histidine 187 and histidine 202.

Belongs to the cytochrome b family. PetB subfamily. As to quaternary structure, the 4 large subunits of the cytochrome b6-f complex are cytochrome b6, subunit IV (17 kDa polypeptide, PetD), cytochrome f and the Rieske protein, while the 4 small subunits are PetG, PetL, PetM and PetN. The complex functions as a dimer. Heme b is required as a cofactor. Heme c serves as cofactor.

It localises to the plastid. It is found in the chloroplast thylakoid membrane. Component of the cytochrome b6-f complex, which mediates electron transfer between photosystem II (PSII) and photosystem I (PSI), cyclic electron flow around PSI, and state transitions. This is Cytochrome b6 from Oenothera elata subsp. hookeri (Hooker's evening primrose).